The sequence spans 59 residues: MAVPKRKTSPSKRGMRRSADALKAPTYVEDKNSGELRRPHHIDLKSGMYRGRQVLEAKE.

Residues 1-16 are compositionally biased toward basic residues; the sequence is MAVPKRKTSPSKRGMR. Positions 1 to 59 are disordered; the sequence is MAVPKRKTSPSKRGMRRSADALKAPTYVEDKNSGELRRPHHIDLKSGMYRGRQVLEAKE. Basic and acidic residues predominate over residues 28–44; that stretch reads VEDKNSGELRRPHHIDL.

This sequence belongs to the bacterial ribosomal protein bL32 family.

In Brucella anthropi (strain ATCC 49188 / DSM 6882 / CCUG 24695 / JCM 21032 / LMG 3331 / NBRC 15819 / NCTC 12168 / Alc 37) (Ochrobactrum anthropi), this protein is Large ribosomal subunit protein bL32.